A 160-amino-acid chain; its full sequence is Large ribosomal subunit protein uL16 (160 aa).

Residues 138–160 (KNLEAPSQEKTKNSKKSQEEVKQ) form a disordered region.

It belongs to the universal ribosomal protein uL16 family. Part of the 50S ribosomal subunit.

Functionally, binds 23S rRNA and is also seen to make contacts with the A and possibly P site tRNAs. The polypeptide is Large ribosomal subunit protein uL16 (Prochlorococcus marinus (strain MIT 9215)).